The primary structure comprises 373 residues: Leucine-, isoleucine-, valine-, threonine-, and alanine-binding protein (373 aa).

The signal sequence occupies residues 1–26 (MKKGTQRLSRLFAAMAIAGFASYSMA). A disulfide bond links cysteine 80 and cysteine 105.

The protein belongs to the leucine-binding protein family.

It localises to the periplasm. Its function is as follows. Component of the high-affinity leucine, isoleucine, valine transport system I (LIV-I), which is operative without Na(+) and is specific for alanine and threonine, in addition to branched-chain amino acids. Binds L-leucine, L-isoleucine, L-valine, L-threonine and L-alanine with nanomolar affinities. Can also bind L-homoserine with high affinity. The polypeptide is Leucine-, isoleucine-, valine-, threonine-, and alanine-binding protein (braC) (Pseudomonas aeruginosa (strain ATCC 15692 / DSM 22644 / CIP 104116 / JCM 14847 / LMG 12228 / 1C / PRS 101 / PAO1)).